Consider the following 302-residue polypeptide: Deoxyhypusine hydroxylase (302 aa).

N-acetylmethionine is present on M1. HEAT-like PBS-type repeat units lie at residues 54–80 (LKHE…VLQD), 87–113 (VRHE…YSSD), 174–200 (ERYR…GLHC), 205–231 (FRHE…ALAR), and 238–264 (VRHE…HADD). H56, H89, and E90 together coordinate Fe cation. Fe cation is bound by residues H207, H240, and E241.

The protein belongs to the deoxyhypusine hydroxylase family. Fe(2+) serves as cofactor.

It carries out the reaction [eIF5A protein]-deoxyhypusine + AH2 + O2 = [eIF5A protein]-hypusine + A + H2O. The protein operates within protein modification; eIF5A hypusination. Catalyzes the hydroxylation of the N(6)-(4-aminobutyl)-L-lysine intermediate produced by deoxyhypusine synthase/DHPS on a critical lysine of the eukaryotic translation initiation factor 5A/eIF-5A. This is the second step of the post-translational modification of that lysine into an unusual amino acid residue named hypusine. Hypusination is unique to mature eIF-5A factor and is essential for its function. This Homo sapiens (Human) protein is Deoxyhypusine hydroxylase.